We begin with the raw amino-acid sequence, 133 residues long: Fatty acid-binding protein, heart (133 aa).

The residue at position 2 (Ala2) is an N-acetylalanine. Phosphothreonine is present on Thr8. Tyr20 carries the phosphotyrosine; by Tyr-kinases modification. A Phosphoserine modification is found at Ser23. The residue at position 30 (Thr30) is a Phosphothreonine. Residue Ser83 is modified to Phosphoserine. Arg127–Tyr129 serves as a coordination point for (9Z)-octadecenoate. Hexadecanoate is bound at residue Arg127–Tyr129. Arg127–Tyr129 provides a ligand contact to octadecanoate.

As to expression, heart, but also skeletal muscle, kidney, brain and mammary gland.

Its subcellular location is the cytoplasm. Functionally, FABPs are thought to play a role in the intracellular transport of long-chain fatty acids and their acyl-CoA esters. The chain is Fatty acid-binding protein, heart (Fabp3) from Rattus norvegicus (Rat).